We begin with the raw amino-acid sequence, 168 residues long: Phosphopantetheine adenylyltransferase (168 aa).

A substrate-binding site is contributed by Thr-10. Residues 10 to 11 (TF) and His-18 each bind ATP. 3 residues coordinate substrate: Lys-42, Leu-75, and Arg-89. ATP-binding positions include 90-92 (GVR), Glu-100, and 125-131 (YTYVASS).

This sequence belongs to the bacterial CoaD family. As to quaternary structure, homohexamer. Mg(2+) is required as a cofactor.

It is found in the cytoplasm. The catalysed reaction is (R)-4'-phosphopantetheine + ATP + H(+) = 3'-dephospho-CoA + diphosphate. Its pathway is cofactor biosynthesis; coenzyme A biosynthesis; CoA from (R)-pantothenate: step 4/5. In terms of biological role, reversibly transfers an adenylyl group from ATP to 4'-phosphopantetheine, yielding dephospho-CoA (dPCoA) and pyrophosphate. The protein is Phosphopantetheine adenylyltransferase of Prosthecochloris aestuarii (strain DSM 271 / SK 413).